We begin with the raw amino-acid sequence, 332 residues long: Ornithine carbamoyltransferase, catabolic (332 aa).

Residues 60–63 (STRT), Gln87, Arg111, and 138–141 (HPTQ) each bind carbamoyl phosphate. L-ornithine contacts are provided by residues Asn170, Asp230, and 234–235 (SM). Residues 271 to 272 (CL) and Arg316 each bind carbamoyl phosphate.

The protein belongs to the aspartate/ornithine carbamoyltransferase superfamily. OTCase family.

The protein resides in the cytoplasm. It carries out the reaction carbamoyl phosphate + L-ornithine = L-citrulline + phosphate + H(+). Its pathway is amino-acid degradation; L-arginine degradation via ADI pathway; carbamoyl phosphate from L-arginine: step 2/2. Reversibly catalyzes the transfer of the carbamoyl group from carbamoyl phosphate (CP) to the N(epsilon) atom of ornithine (ORN) to produce L-citrulline. In Bacillus cereus (strain ATCC 14579 / DSM 31 / CCUG 7414 / JCM 2152 / NBRC 15305 / NCIMB 9373 / NCTC 2599 / NRRL B-3711), this protein is Ornithine carbamoyltransferase, catabolic (arcB).